The primary structure comprises 102 residues: Small ribosomal subunit protein uS10 (102 aa).

It belongs to the universal ribosomal protein uS10 family. Part of the 30S ribosomal subunit.

Its function is as follows. Involved in the binding of tRNA to the ribosomes. In Streptomyces griseus subsp. griseus (strain JCM 4626 / CBS 651.72 / NBRC 13350 / KCC S-0626 / ISP 5235), this protein is Small ribosomal subunit protein uS10.